The following is a 158-amino-acid chain: Transcription elongation factor GreA (158 aa).

The interval 41 to 61 (GDLSENAEYHAAKEDQSHNEG) is disordered. Residues 51 to 74 (AAKEDQSHNEGRIAELEDKLARAE) adopt a coiled-coil conformation.

This sequence belongs to the GreA/GreB family.

Necessary for efficient RNA polymerase transcription elongation past template-encoded arresting sites. The arresting sites in DNA have the property of trapping a certain fraction of elongating RNA polymerases that pass through, resulting in locked ternary complexes. Cleavage of the nascent transcript by cleavage factors such as GreA or GreB allows the resumption of elongation from the new 3'terminus. GreA releases sequences of 2 to 3 nucleotides. In Nitrobacter hamburgensis (strain DSM 10229 / NCIMB 13809 / X14), this protein is Transcription elongation factor GreA.